Consider the following 44-residue polypeptide: SCIKHGDFCDGDKDDCQCCRDNGFCSCSGIFGLKWNCRCDVGTT.

4 disulfides stabilise this stretch: Cys-2/Cys-19, Cys-9/Cys-25, Cys-18/Cys-39, and Cys-27/Cys-37.

As to expression, expressed by the venom gland.

It is found in the secreted. In terms of biological role, omega-agatoxins are antagonists of voltage-gated calcium channels (Cav). Toxic to mice by intracerebroventricular injection. The chain is U4-ctenitoxin-Co1a from Ctenus ornatus (Brazilian spider).